Consider the following 360-residue polypeptide: UDP-N-acetylglucosamine--N-acetylmuramyl-(pentapeptide) pyrophosphoryl-undecaprenol N-acetylglucosamine transferase (360 aa).

Residues 15 to 17, N124, R165, S191, and Q285 contribute to the UDP-N-acetyl-alpha-D-glucosamine site; that span reads TGG.

The protein belongs to the glycosyltransferase 28 family. MurG subfamily.

The protein resides in the cell inner membrane. The catalysed reaction is di-trans,octa-cis-undecaprenyl diphospho-N-acetyl-alpha-D-muramoyl-L-alanyl-D-glutamyl-meso-2,6-diaminopimeloyl-D-alanyl-D-alanine + UDP-N-acetyl-alpha-D-glucosamine = di-trans,octa-cis-undecaprenyl diphospho-[N-acetyl-alpha-D-glucosaminyl-(1-&gt;4)]-N-acetyl-alpha-D-muramoyl-L-alanyl-D-glutamyl-meso-2,6-diaminopimeloyl-D-alanyl-D-alanine + UDP + H(+). It functions in the pathway cell wall biogenesis; peptidoglycan biosynthesis. Its function is as follows. Cell wall formation. Catalyzes the transfer of a GlcNAc subunit on undecaprenyl-pyrophosphoryl-MurNAc-pentapeptide (lipid intermediate I) to form undecaprenyl-pyrophosphoryl-MurNAc-(pentapeptide)GlcNAc (lipid intermediate II). In Gloeothece citriformis (strain PCC 7424) (Cyanothece sp. (strain PCC 7424)), this protein is UDP-N-acetylglucosamine--N-acetylmuramyl-(pentapeptide) pyrophosphoryl-undecaprenol N-acetylglucosamine transferase.